The primary structure comprises 416 residues: Inositol phosphate phosphatase SopB (416 aa).

Residue Cys-315 is part of the active site. Residues 315–321 carry the CX5R motif motif; sequence CKSGKDR.

This sequence belongs to the phosphatase IpgD/SopB family.

The protein resides in the secreted. In terms of biological role, converts phosphatidylinositol 3,4,5-trisphosphate (PtdIns 3,4,5-P3) to PtdIns 3-P and prevents the transition of PtdIns 3-P to PtdIns 3,5-P2. It is one of the known effectors injected by Salmonella into the host cell and is required for invasion and for an efficient generation and maintenance of Salmonella-containing vacuole (SVC). Alteration of the phosphoinositide composition of the plasma membrane causes membrane ruffling and actin cytoskeleton rearrangements. The persistence of PtdIns 3-P diverts the SCV from the endocytic pathway resulting in enlarged vesicles, which are essential to create a favorable environment where Salmonella can replicate and avoid immune defenses of the host cell. In Salmonella bongori, this protein is Inositol phosphate phosphatase SopB (sopB).